We begin with the raw amino-acid sequence, 428 residues long: Histidine--tRNA ligase (428 aa).

It belongs to the class-II aminoacyl-tRNA synthetase family. In terms of assembly, homodimer.

It is found in the cytoplasm. The catalysed reaction is tRNA(His) + L-histidine + ATP = L-histidyl-tRNA(His) + AMP + diphosphate + H(+). This is Histidine--tRNA ligase from Staphylococcus carnosus (strain TM300).